The primary structure comprises 1328 residues: ABC transporter G family member 2 (1328 aa).

Residues 53–299 (VTARNLSMSI…FEGLGFKLPK (247 aa)) enclose the ABC transporter 1 domain. Residue 91–98 (GSPGCGKT) participates in ATP binding. In terms of domain architecture, ABC transmembrane type-2 1 spans 388 to 665 (ISSQVAVRMR…FGMYFFLKNV (278 aa)). The next 7 membrane-spanning stretches (helical) occupy residues 398 to 418 (IIKS…LDLN), 428 to 448 (LIFF…AILF), 477 to 497 (IPIA…MCGL), 504 to 524 (FIYF…FFKM), 534 to 554 (LASV…GFMA), 559 to 579 (IGGW…FEGL), and 642 to 662 (IDLL…YFFL). The interval 670–691 (RASDPKNDKRSKKASKRSKKIK) is disordered. A compositionally biased stretch (basic residues) spans 678–689 (KRSKKASKRSKK). In terms of domain architecture, ABC transporter 2 spans 721–960 (VYEVDVKKDG…DLLGYFENHG (240 aa)). Residue 755–762 (GPSGAGKS) coordinates ATP. In terms of domain architecture, ABC transmembrane type-2 2 spans 1049-1286 (VRRVQNIRTR…PICPITNGNQ (238 aa)). The next 6 membrane-spanning stretches (helical) occupy residues 1059–1076 (LMRS…FVRM), 1087–1107 (VSIL…SIPI), 1128–1148 (IYLF…AIIY), 1172–1192 (FISF…ATVL), 1197–1217 (IAHA…GFMI), and 1303–1323 (AVIF…LKFI).

This sequence belongs to the ABC transporter superfamily. ABCG family. PDR (TC 3.A.1.205) subfamily.

It localises to the endosome membrane. Its function is as follows. Required for endocytosis and endosomal pH regulation. This Dictyostelium discoideum (Social amoeba) protein is ABC transporter G family member 2 (abcG2).